The chain runs to 137 residues: Large ribosomal subunit protein uL16 (137 aa).

Belongs to the universal ribosomal protein uL16 family. Part of the 50S ribosomal subunit.

Its function is as follows. Binds 23S rRNA and is also seen to make contacts with the A and possibly P site tRNAs. This chain is Large ribosomal subunit protein uL16, found in Azotobacter vinelandii (strain DJ / ATCC BAA-1303).